We begin with the raw amino-acid sequence, 207 residues long: Holliday junction resolvase RecU (207 aa).

The segment at 1–30 is disordered; sequence MPIRYPNGQPYSRSPKQGQAKKPLPADTYS. Positions 87, 89, 102, and 121 each coordinate Mg(2+).

Belongs to the RecU family. Mg(2+) is required as a cofactor.

It is found in the cytoplasm. It carries out the reaction Endonucleolytic cleavage at a junction such as a reciprocal single-stranded crossover between two homologous DNA duplexes (Holliday junction).. Endonuclease that resolves Holliday junction intermediates in genetic recombination. Cleaves mobile four-strand junctions by introducing symmetrical nicks in paired strands. Promotes annealing of linear ssDNA with homologous dsDNA. Required for DNA repair, homologous recombination and chromosome segregation. The sequence is that of Holliday junction resolvase RecU from Shouchella clausii (strain KSM-K16) (Alkalihalobacillus clausii).